A 309-amino-acid chain; its full sequence is MPKPYVAINMAELKNEPKTFEMFASVGPKVCMVTARHPGFVGFQNHIQIGILPFGNRYGGAKMDMTKESSTVRVLQYTFWKDWKDHEEMHRQNWSYLFRLCYSCASQMIWGPWEPIYEIIYANMPINTEMTDFTAVVGKKFAEGKPLDIPVISQPYGKRVVAFAEHSVIPGKEKQFEDAIVRTLEMLKKAPGFLGAMVLKEIGVSGIGSMQFGAKGFHQVLENPGSLEPDPNNVMYSVPEAKNTPQQYIVHVEWANTDALMFGMGRVLLYPELRQVHDEVLDTLVYGPYIRILNPMMEGTFWREYLNEQ.

Cys31 is subject to Cysteine persulfide. Residues His86, His90, and Glu114 each contribute to the Fe cation site.

In terms of assembly, homoicosatetramer. The resulting structure is a hollow sphere where catalysis takes place in the inside cavity. Requires Fe cation as cofactor.

Its subcellular location is the cytoplasm. The catalysed reaction is 4 sulfur + O2 + 4 H2O = 2 hydrogen sulfide + 2 sulfite + 6 H(+). Its activity is regulated as follows. Inhibited by zinc. Catalyzes the simultaneous oxidation and reduction of elemental sulfur in the presence of oxygen, with sulfite and hydrogen sulfide as products. This is Sulfur oxygenase/reductase (sor) from Acidianus ambivalens (Desulfurolobus ambivalens).